A 318-amino-acid chain; its full sequence is Basic leucine zipper (bZIP) transcription factor atfB (318 aa).

2 disordered regions span residues 79–100 and 114–164; these read LKNT…KKLQ and FNSS…EKRE. The basic motif stretch occupies residues 160 to 199; the sequence is REKREKFLERNRLAASKCRQKKKEHTKLLETRFREVSSKK. A bZIP domain is found at 160–223; the sequence is REKREKFLER…LNLKNEMLRH (64 aa). Residues 202 to 216 are leucine-zipper; the sequence is LESEIEHLRSEVLNL. A disordered region spans residues 247–304; sequence TPNRDLVSPMRSPEQMTASTPHGLSFGFDGPMQLPSEMGSPLDQRRDSEQSIMTESSY.

This sequence belongs to the bZIP family. ATF subfamily.

It localises to the nucleus. In terms of biological role, transcription factor that acts as a key player in the regulatory circuit that integrates secondary metabolism and cellular response to oxidative stress. Regulates the genes involved in development, stress response, and secondary metabolism through direct binding to their promoters. Particularly involved in the resistance to oxidative stress in asexual conidiospores. Binds aflatoxin gene promoters carrying the cAMP-response element (CRE1) under aflatoxin-inducing conditions. The polypeptide is Basic leucine zipper (bZIP) transcription factor atfB (Aspergillus parasiticus (strain ATCC 56775 / NRRL 5862 / SRRC 143 / SU-1)).